Consider the following 309-residue polypeptide: MSSTQFNKGPSYGLSAEVKNRLLSKYDPQKEAELRTWIEGLTGLSIGPDFQKGLKDGTILCTLMNKLQPGSVPKINRSMQNWHQLENLSNFIKAMVSYGMNPVDLFEANDLFESGNMTQVQVSLLALAGKAKTKGLQSGVDIGVKYSEKQERNFDDATMKAGQCVIGLQMGTNKCASQSGMTAYGTRRHLYDPKNHILPPMDHSTISLQMGTNKCASQVGMTAPGTRRHIYDTKLGTDKCDNSSMSLQMGYTQGANQSGQVFGLGRQIYDPKYCPQGTVADGAPSGTGDCPDPGEVPEYPPYYQEEAGY.

Ser2 bears the N-acetylserine mark. Residues Lys8 and Lys25 each carry the N6-acetyllysine modification. The Calponin-homology (CH) domain maps to 28-132 (PQKEAELRTW…SLLALAGKAK (105 aa)). Ser138 bears the Phosphoserine mark. Calponin-like repeat units lie at residues 166–191 (IGLQMGTNKCASQSGMTAYGTRRHLY), 206–231 (ISLQMGTNKCASQVGMTAPGTRRHIY), and 245–269 (MSLQMGYTQGANQSGQVFGLGRQIY). The interval 283–309 (APSGTGDCPDPGEVPEYPPYYQEEAGY) is disordered.

The protein belongs to the calponin family. In terms of tissue distribution, heart and smooth muscle.

In terms of biological role, thin filament-associated protein that is implicated in the regulation and modulation of smooth muscle contraction. It is capable of binding to actin, calmodulin and tropomyosin. The interaction of calponin with actin inhibits the actomyosin Mg-ATPase activity. The polypeptide is Calponin-2 (CNN2) (Homo sapiens (Human)).